An 835-amino-acid polypeptide reads, in one-letter code: Cell division control protein 48 (835 aa).

Residues 1 to 21 are disordered; that stretch reads MGEEHKPLLDASGVDPREEDK. 257–263 lines the ATP pocket; it reads PGTGKTL. Glycyl lysine isopeptide (Lys-Gly) (interchain with G-Cter in ubiquitin) cross-links involve residues Lys305, Lys322, and Lys346. ATP contacts are provided by Asn358 and His394. 2 positions are modified to phosphoserine: Ser472 and Ser519. Residue Lys522 forms a Glycyl lysine isopeptide (Lys-Gly) (interchain with G-Cter in ubiquitin) linkage. Position 531-536 (531-536) interacts with ATP; the sequence is GTGKTL. Residues Lys539, Lys594, and Lys673 each participate in a glycyl lysine isopeptide (Lys-Gly) (interchain with G-Cter in ubiquitin) cross-link. Basic and acidic residues predominate over residues 720 to 729; it reads EAEKEVKVEG. The tract at residues 720–746 is disordered; that stretch reads EAEKEVKVEGEDVEMTDEGAKAEQEPE. Thr735 carries the phosphothreonine modification. Ser770 is subject to Phosphoserine. Residues 792–835 are disordered; the sequence is SNFNFNDAPLGTTATDNANSNNSAPSGAGAAFGSNAEEDDDLYS. Over residues 802–826 the composition is skewed to low complexity; it reads GTTATDNANSNNSAPSGAGAAFGSN.

It belongs to the AAA ATPase family. As to quaternary structure, component of the heterotrimeric CDC48-NPL4-UFD1 ATPase complex. The CDC48-NPL4-UFD1 ATPase complex interacts with the HRD1 ubiquitin ligase complex composed of the E3 ligase HRD1, its cofactors HRD3, USA1 and DER1, substrate recruiting factor YOS9 and CDC48-binding protein UBX2. Interaction between the complexes is mediated by interaction between CDC48-NPL4-UFD1 complex member CDC48 and HRD1 complex member UBX2. Forms a complex composed of CDC48, NPL4, UFD1, UFD2 and SHP1. Forms a complex composed of CDC48, NPL4, UFD1, DOA1, SHP1 and deubiquitinase OTU1; within the complex interacts with DOA1/UFD3 and OTU1 to prevent multiubiquitination of substrates. Interacts with UFD2, to add further ubiquitin moieties; the interaction with UFD2 is prevented by DOA1/UFD3. Forms a complex composed of CDC48, DOA1, deubiquitinase UBP3 and probably BRE5; within the complex interacts with DOA1 and UBP3. Interacts (via C-terminus) with DOA1 (via PUL domain); the interaction is direct. Interacts with NPL4. Interacts with SHP1/UBX1, UBX2, UBX3, UBX4, UBX5, UBX6 and UBX7. Interacts with VMS1; the interaction recruits CDC48 to the mitochondria in response to mitochondrial stress. Component of the ribosome quality control complex (RQC), composed of the E3 ubiquitin ligase RKR1/LTN1, RQC1 and RQC2, as well as CDC48 and its ubiquitin-binding cofactors. RQC forms a stable complex with 60S ribosomal subunits. Interacts with ASE1 and CDC5; the interaction is likely to result in their degradation. Component of the DSCc E3 ligase complexes composed of at least TUL1, DSC2, DSC3, UBX3, CDC48 as well as VLD1 for the vacuole-localized complex or GLD1 for the Golgi/endosome-localized complex.

It is found in the microsome. The protein resides in the endoplasmic reticulum. The protein localises to the cytoplasm. It catalyses the reaction ATP + H2O = ADP + phosphate + H(+). With respect to regulation, the first ATP-binding region has low ATPase activity. The second ATP-binding region is responsible for ATPase activity. ATP binding to the first ATP-binding region induces intrinsic activity of the second ATP-binding region. While ATP binding to the first ATP-binding region appears to prevent ATP hydrolysis by the second ATP-binding region, ADP-binding to first region promotes the coordinate and cooperative ATPase cycle of the second ATP-binding region. ATP binding to the first ATP-binding region induces a conformational change, promoting the rotation of the first ATP-binding region relative to the second ATP-binding region in the hexamer. Functionally, ATP-dependent chaperone which probably uses the energy provided by ATP hydrolysis to generate mechanical force to unfold substrate proteins, disassemble protein complexes, and disaggregate protein aggregates. By recruiting and promoting the degradation of ubiquitinated proteins, plays a role in the ubiquitin fusion degradation (UFD) pathway. Has a role in the endoplasmic reticulum-associated degradation (ERAD) pathway which mediates the cytoplasmic elimination of misfolded proteins exported from the ER. Required for the proteasome-dependent processing/activation of MGA2 and SPT23 transcription factors leading to the subsequent expression of OLE1. Has an additional role in the turnover of OLE1 where it targets ubiquitinated OLE1 and other proteins to the ERAD. Regulates ubiquitin-mediated mitochondria protein degradation. Involved in spindle disassembly probably by promoting the degradation of spindle assembly factors ASE1 and CDC5 at the end of mitosis. Component of the ribosome quality control complex (RQC), a ribosome-associated complex that mediates ubiquitination and extraction of incompletely synthesized nascent chains for proteasomal degradation. CDC48 may provide the mechanical force that dislodges the polyubiquitinated nascent peptides from the exit channel. Required for ribophagy, a process which relocalizes ribosomal particles into the vacuole for degradation in response to starvation. Component of the DSC E3 ubiquitin ligase complexes that tag proteins present in Golgi, endosome and vacuole membranes and function in protein homeostasis under non-stress conditions and support a role in protein quality control. Substrate initially binds through the attached polyubiquitin chain to UDF1/NPL4 and then moves through the pore of the ATPase rings and is thereby unfolded. Acts on a broad range of even well-folded proteins via ubiquitin-binding and unfolding to initiate substrate processing. Involved in degradation of mislocalized tail-anchored transmembrane proteins extracted from the mitochondrion outer membrane by MSP1 and ubiquitinated by DOA10. The chain is Cell division control protein 48 from Saccharomyces cerevisiae (strain ATCC 204508 / S288c) (Baker's yeast).